Here is an 874-residue protein sequence, read N- to C-terminus: Alanine--tRNA ligase (874 aa).

The Zn(2+) site is built by His-564, His-568, Cys-665, and His-669.

This sequence belongs to the class-II aminoacyl-tRNA synthetase family. Requires Zn(2+) as cofactor.

The protein resides in the cytoplasm. It carries out the reaction tRNA(Ala) + L-alanine + ATP = L-alanyl-tRNA(Ala) + AMP + diphosphate. Functionally, catalyzes the attachment of alanine to tRNA(Ala) in a two-step reaction: alanine is first activated by ATP to form Ala-AMP and then transferred to the acceptor end of tRNA(Ala). Also edits incorrectly charged Ser-tRNA(Ala) and Gly-tRNA(Ala) via its editing domain. The protein is Alanine--tRNA ligase of Burkholderia thailandensis (strain ATCC 700388 / DSM 13276 / CCUG 48851 / CIP 106301 / E264).